A 462-amino-acid chain; its full sequence is ATP synthase subunit beta (462 aa).

151–158 (GGAGVGKT) contacts ATP.

The protein belongs to the ATPase alpha/beta chains family. As to quaternary structure, F-type ATPases have 2 components, CF(1) - the catalytic core - and CF(0) - the membrane proton channel. CF(1) has five subunits: alpha(3), beta(3), gamma(1), delta(1), epsilon(1). CF(0) has four main subunits: a(1), b(1), b'(1) and c(9-12).

It localises to the cell inner membrane. It carries out the reaction ATP + H2O + 4 H(+)(in) = ADP + phosphate + 5 H(+)(out). In terms of biological role, produces ATP from ADP in the presence of a proton gradient across the membrane. The catalytic sites are hosted primarily by the beta subunits. The chain is ATP synthase subunit beta from Chlorobium phaeobacteroides (strain DSM 266 / SMG 266 / 2430).